Reading from the N-terminus, the 464-residue chain is 17,18-epoxy-17-hydroxycur-19-ene N-malonyltransferase (464 aa).

Residues His-191 and Asp-403 each act as proton acceptor in the active site.

This sequence belongs to the plant acyltransferase family. In terms of assembly, monomer. As to expression, mainly expressed in roots.

The protein localises to the cytoplasm. It carries out the reaction 17,18-epoxy-17-hydroxycur-19-ene + malonyl-CoA = prestrychnine + CoA. It functions in the pathway alkaloid biosynthesis. Its function is as follows. Malonylransferase involved in the biosynthesis of curare monoterpene indole alkaloids (MIAs), natural products such as strychnine, a neurotoxic compound used as a pesticide to control rodents, and its pharmacologically active derivatives, including brucine, used to regulate blood pressure. Curare alkaloids act as animal glycine receptor antagonists. Catalyzes the conversion of 17,18-epoxy-17-hydroxycur-19-ene (Wieland-Gumlich aldehyde) to prestrychnine, which is spontaneously converted into strychnine and isostrychnine. The sequence is that of 17,18-epoxy-17-hydroxycur-19-ene N-malonyltransferase from Strychnos nux-vomica (Poison nut).